A 572-amino-acid chain; its full sequence is Moesin/ezrin/radixin homolog 1 (572 aa).

The 291-residue stretch at 1–291 folds into the FERM domain; it reads MNVRVTTMDA…GNHELYMRRR (291 aa). Positions 456–491 are disordered; that stretch reads TTTPSHHHVEEEEEMDNEEELVNGENGNQDFSKDFD. Positions 466-477 are enriched in acidic residues; the sequence is EEEEMDNEEELV. The residue at position 553 (Thr-553) is a Phosphothreonine.

Interacts with cytoskeletal actin.

It localises to the cell junction. Its subcellular location is the adherens junction. The protein localises to the cell projection. The protein resides in the microvillus. It is found in the rhabdomere. It localises to the cell membrane. Its subcellular location is the cytoplasm. The protein localises to the cytoskeleton. Involved in connections of major cytoskeletal structures to the plasma membrane. This is Moesin/ezrin/radixin homolog 1 from Culex quinquefasciatus (Southern house mosquito).